A 1166-amino-acid polypeptide reads, in one-letter code: ATP-dependent helicase/deoxyribonuclease subunit B (1166 aa).

The UvrD-like helicase ATP-binding domain occupies Met1 to Ser390. Gly8–Thr15 lines the ATP pocket. The 306-residue stretch at Thr281 to Asp586 folds into the UvrD-like helicase C-terminal domain. Residues Cys801, Cys1121, Cys1124, and Cys1130 each coordinate [4Fe-4S] cluster.

It belongs to the helicase family. AddB/RexB type 1 subfamily. Heterodimer of AddA and AddB. Requires Mg(2+) as cofactor. The cofactor is [4Fe-4S] cluster.

The heterodimer acts as both an ATP-dependent DNA helicase and an ATP-dependent, dual-direction single-stranded exonuclease. Recognizes the chi site generating a DNA molecule suitable for the initiation of homologous recombination. The AddB subunit has 5' -&gt; 3' nuclease activity but not helicase activity. In Bacillus velezensis (strain DSM 23117 / BGSC 10A6 / LMG 26770 / FZB42) (Bacillus amyloliquefaciens subsp. plantarum), this protein is ATP-dependent helicase/deoxyribonuclease subunit B.